Reading from the N-terminus, the 542-residue chain is uncharacterized protein (542 aa).

Asn-6 carries N-linked (GlcNAc...) asparagine glycosylation. 8 helical membrane passes run 61–81 (FSTW…ATVV), 95–115 (SAVW…LSVA), 139–159 (SMPV…AAGV), 188–208 (HIVG…SLST), 217–237 (FYAT…LAKC), 255–275 (GWHP…WCMT), 298–318 (IALA…VLAF), and 348–368 (GSMA…ITAM). Residue Asn-394 is glycosylated (N-linked (GlcNAc...) asparagine). 4 helical membrane passes run 402–422 (IAVW…LGSI), 424–444 (AIEA…VIPI), 469–489 (FVNA…LMPT), and 500–520 (YAVV…WSGA).

Belongs to the amino acid-polyamine-organocation (APC) superfamily.

Its subcellular location is the golgi apparatus. The protein localises to the membrane. This is an uncharacterized protein from Schizosaccharomyces pombe (strain 972 / ATCC 24843) (Fission yeast).